Consider the following 225-residue polypeptide: Holliday junction branch migration complex subunit RuvA (225 aa).

The domain I stretch occupies residues 1–68 (MIGWLQGQKV…DDGSSLFGFP (68 aa)). Positions 69–147 (ERRERDMFRT…EFSCRDPGMS (79 aa)) are domain II. A flexible linker region spans residues 148-158 (LVDNGVIDSHQ). Positions 159 to 225 (LKDSSLHELQ…SLRWLSQEAA (67 aa)) are domain III.

The protein belongs to the RuvA family. Homotetramer. Forms an RuvA(8)-RuvB(12)-Holliday junction (HJ) complex. HJ DNA is sandwiched between 2 RuvA tetramers; dsDNA enters through RuvA and exits via RuvB. An RuvB hexamer assembles on each DNA strand where it exits the tetramer. Each RuvB hexamer is contacted by two RuvA subunits (via domain III) on 2 adjacent RuvB subunits; this complex drives branch migration. In the full resolvosome a probable DNA-RuvA(4)-RuvB(12)-RuvC(2) complex forms which resolves the HJ.

It is found in the cytoplasm. In terms of biological role, the RuvA-RuvB-RuvC complex processes Holliday junction (HJ) DNA during genetic recombination and DNA repair, while the RuvA-RuvB complex plays an important role in the rescue of blocked DNA replication forks via replication fork reversal (RFR). RuvA specifically binds to HJ cruciform DNA, conferring on it an open structure. The RuvB hexamer acts as an ATP-dependent pump, pulling dsDNA into and through the RuvAB complex. HJ branch migration allows RuvC to scan DNA until it finds its consensus sequence, where it cleaves and resolves the cruciform DNA. This chain is Holliday junction branch migration complex subunit RuvA, found in Prochlorococcus marinus (strain MIT 9313).